The primary structure comprises 1016 residues: Protein kinase C-like 2 (1016 aa).

Residues 1 to 68 enclose the REM-1 1 domain; the sequence is MDMIDEAITE…LEKLKLRKNG (68 aa). Residues 68 to 101 form a disordered region; it reads GVRKSNSEKPSVGIEKNPSFSTTKSAKSFSSTSS. The span at 86–101 shows a compositional bias: low complexity; the sequence is SFSTTKSAKSFSSTSS. The REM-1 2 domain occupies 111-188; that stretch reads NYDTPLTISK…LKRYHDLHIE (78 aa). Residues 195–307 form the C2 domain; that stretch reads PSTESRGNLN…VEKQRRKKVE (113 aa). 2 Phorbol-ester/DAG-type zinc fingers span residues 405–453 and 473–523; these read GHKF…VTKC and PHHF…PDFC. Residues 543–602 are disordered; sequence YKAQQHKQKSSHHKHHHHKKSKSSSSKHKENDKASVSITTTTTPSITPADPVPTSPKPLA. The segment covering 546–568 has biased composition (basic residues); sequence QQHKQKSSHHKHHHHKKSKSSSS. Low complexity predominate over residues 579–590; the sequence is SITTTTTPSITP. The 260-residue stretch at 683–942 folds into the Protein kinase domain; sequence FTFLSVLGKG…AEDVMTHPFF (260 aa). Residues 689–697 and lysine 712 each bind ATP; that span reads LGKGNFGKV. Aspartate 808 serves as the catalytic Proton acceptor. The AGC-kinase C-terminal domain occupies 943 to 1013; sequence SNINWDDIYH…SCEDDKPSTT (71 aa). Threonine 984 is modified (phosphothreonine).

The protein belongs to the protein kinase superfamily. AGC Ser/Thr protein kinase family. PKC subfamily. In terms of assembly, interacts with rho2.

The catalysed reaction is L-seryl-[protein] + ATP = O-phospho-L-seryl-[protein] + ADP + H(+). The enzyme catalyses L-threonyl-[protein] + ATP = O-phospho-L-threonyl-[protein] + ADP + H(+). Involved in the control of the cell shape. Target of the inhibitor staurosporine. The polypeptide is Protein kinase C-like 2 (pck2) (Schizosaccharomyces pombe (strain 972 / ATCC 24843) (Fission yeast)).